The primary structure comprises 387 residues: Succinate--CoA ligase [ADP-forming] subunit beta (387 aa).

Positions 9-236 (KELFAKHNVP…RAATDPLELK (228 aa)) constitute an ATP-grasp domain. ATP contacts are provided by residues Lys45, 52-54 (GRG), Ser94, and Glu99. The Mg(2+) site is built by Asn191 and Asp205. Substrate contacts are provided by residues Asn256 and 318 to 320 (GIT).

This sequence belongs to the succinate/malate CoA ligase beta subunit family. In terms of assembly, heterotetramer of two alpha and two beta subunits. It depends on Mg(2+) as a cofactor.

It catalyses the reaction succinate + ATP + CoA = succinyl-CoA + ADP + phosphate. It carries out the reaction GTP + succinate + CoA = succinyl-CoA + GDP + phosphate. Its pathway is carbohydrate metabolism; tricarboxylic acid cycle; succinate from succinyl-CoA (ligase route): step 1/1. Functionally, succinyl-CoA synthetase functions in the citric acid cycle (TCA), coupling the hydrolysis of succinyl-CoA to the synthesis of either ATP or GTP and thus represents the only step of substrate-level phosphorylation in the TCA. The beta subunit provides nucleotide specificity of the enzyme and binds the substrate succinate, while the binding sites for coenzyme A and phosphate are found in the alpha subunit. The sequence is that of Succinate--CoA ligase [ADP-forming] subunit beta from Mycobacterium tuberculosis (strain CDC 1551 / Oshkosh).